A 344-amino-acid chain; its full sequence is Ferrochelatase (344 aa).

His214 and Glu295 together coordinate Fe cation.

This sequence belongs to the ferrochelatase family.

It localises to the cytoplasm. It catalyses the reaction heme b + 2 H(+) = protoporphyrin IX + Fe(2+). It participates in porphyrin-containing compound metabolism; protoheme biosynthesis; protoheme from protoporphyrin-IX: step 1/1. Functionally, catalyzes the ferrous insertion into protoporphyrin IX. In Rhizobium etli (strain ATCC 51251 / DSM 11541 / JCM 21823 / NBRC 15573 / CFN 42), this protein is Ferrochelatase.